The chain runs to 89 residues: Small ribosomal subunit protein uS15 (89 aa).

Residues 1-21 show a composition bias toward basic and acidic residues; the sequence is MAITQERKNQLINEFKTHESD. Residues 1 to 24 form a disordered region; sequence MAITQERKNQLINEFKTHESDTGS.

This sequence belongs to the universal ribosomal protein uS15 family. Part of the 30S ribosomal subunit. Forms a bridge to the 50S subunit in the 70S ribosome, contacting the 23S rRNA.

In terms of biological role, one of the primary rRNA binding proteins, it binds directly to 16S rRNA where it helps nucleate assembly of the platform of the 30S subunit by binding and bridging several RNA helices of the 16S rRNA. Its function is as follows. Forms an intersubunit bridge (bridge B4) with the 23S rRNA of the 50S subunit in the ribosome. The sequence is that of Small ribosomal subunit protein uS15 from Bacillus subtilis (strain 168).